A 217-amino-acid chain; its full sequence is Large ribosomal subunit protein uL1 (217 aa).

Ser-2 is subject to N-acetylserine. Residue Tyr-11 is modified to Phosphotyrosine. N6-acetyllysine is present on residues Lys-91 and Lys-106. The residue at position 118 (Lys-118) is an N6-acetyllysine; alternate. Residue Lys-118 forms a Glycyl lysine isopeptide (Lys-Gly) (interchain with G-Cter in SUMO1); alternate linkage. Lys-118 is covalently cross-linked (Glycyl lysine isopeptide (Lys-Gly) (interchain with G-Cter in SUMO2); alternate). Lys-161 is covalently cross-linked (Glycyl lysine isopeptide (Lys-Gly) (interchain with G-Cter in SUMO2)).

Belongs to the universal ribosomal protein uL1 family. Component of the large ribosomal subunit.

The protein localises to the cytoplasm. In terms of biological role, component of the large ribosomal subunit. The ribosome is a large ribonucleoprotein complex responsible for the synthesis of proteins in the cell. This chain is Large ribosomal subunit protein uL1 (Rpl10a), found in Mus musculus (Mouse).